The chain runs to 536 residues: Methyl-accepting chemotaxis aspartate transducer (536 aa).

At 1–10 the chain is on the cytoplasmic side; sequence MFNRIRISTS. A helical membrane pass occupies residues 11–31; that stretch reads LFLLLISFCIMQLISTGLSYV. Topologically, residues 32–188 are periplasmic; that stretch reads ALRADNHNLE…ASSQQAYGWS (157 aa). Positions 64-73 are the 3 Arg may form a positively charged pocket, which binds the alpha-carboxyl group of the attractant AA; the sequence is RNTLNRAGTR. A helical transmembrane segment spans residues 189–209; it reads IWLVAGAVLMLLVVTLSAMWW. Over 210–536 the chain is Cytoplasmic; the sequence is LRTMLVQPLN…VKETLDCQTA (327 aa). The region spanning 212–264 is the HAMP domain; that stretch reads TMLVQPLNIIRGHFERIASGDLSAPIEVYGRNEISQLFASLQRMQQSLIGTVG. Residues 269–498 form the Methyl-accepting transducer domain; that stretch reads GAESILIGLQ…ESASAAAALE (230 aa). Residue Q293 is modified to Glutamate methyl ester (Gln). Glutamate methyl ester (Glu) is present on E300. At Q307 the chain carries Glutamate methyl ester (Gln). A glutamate methyl ester (Glu) mark is found at E489 and E498.

The protein belongs to the methyl-accepting chemotaxis (MCP) protein family.

It localises to the cell inner membrane. This protein responds to changes in Asp concentration in the environment, transduces a signal from the outside to the inside of the cell, and facilitates sensory adaptation through various levels of methylation. In terms of biological role, chemotactic-signal transducers respond to changes in the concentration of attractants and repellents in the environment, transduce a signal from the outside to the inside of the cell, and facilitate sensory adaptation through the variation of the level of methylation. Attractants increase the level of methylation while repellents decrease the level of methylation, the methyl groups are added by the methyltransferase CheR and removed by the methylesterase CheB. In Klebsiella aerogenes (strain ATCC 13048 / DSM 30053 / CCUG 1429 / JCM 1235 / KCTC 2190 / NBRC 13534 / NCIMB 10102 / NCTC 10006 / CDC 819-56) (Enterobacter aerogenes), this protein is Methyl-accepting chemotaxis aspartate transducer (tas).